Consider the following 286-residue polypeptide: Undecaprenyl-diphosphatase (286 aa).

7 helical membrane-spanning segments follow: residues 50–70 (GAAF…VYFW), 97–117 (MGWL…IFQD), 126–146 (LWIV…ADAV), 156–176 (LTYK…IPGV), 200–220 (SFLL…YKVM), 236–256 (LATL…LKFV), and 264–284 (FVWY…FNVI).

The protein belongs to the UppP family.

Its subcellular location is the cell membrane. The enzyme catalyses di-trans,octa-cis-undecaprenyl diphosphate + H2O = di-trans,octa-cis-undecaprenyl phosphate + phosphate + H(+). Catalyzes the dephosphorylation of undecaprenyl diphosphate (UPP). Confers resistance to bacitracin. The polypeptide is Undecaprenyl-diphosphatase (Arthrobacter sp. (strain FB24)).